A 350-amino-acid polypeptide reads, in one-letter code: Deoxyribonuclease-2-alpha (350 aa).

Residues 1 to 19 (MAAPSSLLLAALLWVPAEA) form the signal peptide. C22 and C162 are oxidised to a cystine. N-linked (GlcNAc...) asparagine glycosylation is found at N89, N215, N269, and N293. 2 disulfide bridges follow: C270-C350 and C311-C330. The active site involves H298.

Belongs to the DNase II family. As to expression, ubiquitous.

It localises to the lysosome. It catalyses the reaction Endonucleolytic cleavage to nucleoside 3'-phosphates and 3'-phosphooligonucleotide end-products.. Functionally, hydrolyzes DNA under acidic conditions with a preference for double-stranded DNA. Plays a major role in the clearance of nucleic acids generated through apoptosis, hence preventing autoinflammation. Necessary for proper fetal development and for definitive erythropoiesis in fetal liver and bone marrow, where it degrades nuclear DNA expelled from erythroid precursor cells. This chain is Deoxyribonuclease-2-alpha (Dnase2), found in Rattus norvegicus (Rat).